The chain runs to 236 residues: Purine nucleoside phosphorylase DeoD-type (236 aa).

His-5 provides a ligand contact to a purine D-ribonucleoside. Phosphate is bound by residues Gly-21, Arg-25, Arg-44, and 88 to 91; that span reads RIGS. A purine D-ribonucleoside-binding positions include 180–182 and 204–205; these read EME and SD. The active-site Proton donor is the Asp-205.

Belongs to the PNP/UDP phosphorylase family. In terms of assembly, homohexamer; trimer of homodimers.

The catalysed reaction is a purine D-ribonucleoside + phosphate = a purine nucleobase + alpha-D-ribose 1-phosphate. It catalyses the reaction a purine 2'-deoxy-D-ribonucleoside + phosphate = a purine nucleobase + 2-deoxy-alpha-D-ribose 1-phosphate. Functionally, catalyzes the reversible phosphorolytic breakdown of the N-glycosidic bond in the beta-(deoxy)ribonucleoside molecules, with the formation of the corresponding free purine bases and pentose-1-phosphate. This is Purine nucleoside phosphorylase DeoD-type from Tolumonas auensis (strain DSM 9187 / NBRC 110442 / TA 4).